Reading from the N-terminus, the 258-residue chain is Leucine-rich repeat-containing protein 3B (258 aa).

An N-terminal signal peptide occupies residues 1 to 33; it reads MTPLDLWLSRSIPMCLLLQSLVLMVLCFPSAST. The 35-residue stretch at 34 to 68 folds into the LRRNT domain; it reads CPKGCTCQRSESPPHGLNVTCSLSRLKEIPPDVPP. N-linked (GlcNAc...) asparagine glycosylation is present at asparagine 51. LRR repeat units lie at residues 69-90, 93-114, and 118-139; these read DTQLLQLDRNHISLVPDRIFHG, MLRRLNLSHNAVETLGEGAFIG, and SLEVLDLSYNRITSVHKDAFAR. N-linked (GlcNAc...) asparagine glycosylation is present at asparagine 98. An LRRCT domain is found at 149 to 196; sequence NPWHCDCALQQALGGMAHNHERVLCRSSELRDQEGQPFMAVDADLCNL. A helical membrane pass occupies residues 204–224; the sequence is AMLVTMFGWFAMVISYVVYYV.

It belongs to the LRRC3 family.

Its subcellular location is the membrane. In Danio rerio (Zebrafish), this protein is Leucine-rich repeat-containing protein 3B (lrrc3b).